Consider the following 274-residue polypeptide: NAD(P)H dehydrogenase [quinone] 1 (274 aa).

Residues His-12, 18–19 (FN), and Gln-67 contribute to the FAD site. Ser-82 carries the post-translational modification Phosphoserine. 104–107 (LQWF) serves as a coordination point for FAD. Residue 126 to 128 (AYT) participates in substrate binding. FAD is bound by residues 148–151 (TTGG), Tyr-156, and Arg-201. The segment at 225-274 (PSSLFDLNFQAGFLMKKEVQDEEKNKKFGLSVGHHLGKSIPTDNQIKARK) is important for apoenzyme conformational stability. Glycyl lysine isopeptide (Lys-Gly) (interchain with G-Cter in SUMO2) cross-links involve residues Lys-250 and Lys-251.

The protein belongs to the NAD(P)H dehydrogenase (quinone) family. In terms of assembly, homodimer. Interacts with PDLIM4 isoform 2; this interaction stabilizes PDLIM4 isoform 2 in response to oxidative stress and protects it from ubiquitin-independent degradation by the core 20S proteasome. Interacts with TP73 (via SAM domain); this interaction is NADH-dependent, stabilizes TP73 in response to oxidative stress and protects it from ubiquitin-independent degradation by the 20S proteasome. Interacts with TP53; this interaction is NADH-dependent, stabilizes TP53 in response to oxidative stress and protects it from ubiquitin-independent degradation by the 20S proteasome. FAD is required as a cofactor.

It is found in the cytoplasm. It localises to the cytosol. It carries out the reaction a quinone + NADH + H(+) = a quinol + NAD(+). It catalyses the reaction a quinone + NADPH + H(+) = a quinol + NADP(+). The catalysed reaction is ubiquinone-10 + NADH + H(+) = ubiquinol-10 + NAD(+). The enzyme catalyses menadione + NADH + H(+) = menadiol + NAD(+). Functionally, flavin-containing quinone reductase that catalyzes two-electron reduction of quinones to hydroquinones using either NADH or NADPH as electron donors. In a ping-pong kinetic mechanism, the electrons are sequentially transferred from NAD(P)H to flavin cofactor and then from reduced flavin to the quinone, bypassing the formation of semiquinone and reactive oxygen species. Regulates cellular redox state primarily through quinone detoxification. Reduces components of plasma membrane redox system such as coenzyme Q and vitamin quinones, producing antioxidant hydroquinone forms. In the process may function as superoxide scavenger to prevent hydroquinone oxidation and facilitate excretion. Alternatively, can activate quinones and their derivatives by generating redox reactive hydroquinones with DNA cross-linking antitumor potential. Acts as a gatekeeper of the core 20S proteasome known to degrade proteins with unstructured regions. Upon oxidative stress, interacts with tumor suppressors TP53 and TP73 in a NADH-dependent way and inhibits their ubiquitin-independent degradation by the 20S proteasome. This chain is NAD(P)H dehydrogenase [quinone] 1 (NQO1), found in Pongo abelii (Sumatran orangutan).